The primary structure comprises 372 residues: NAD(P)H-quinone oxidoreductase subunit 1 (372 aa).

A run of 8 helical transmembrane segments spans residues 27–47, 97–117, 130–150, 176–196, 204–224, 254–274, 308–328, and 351–371; these read AIWMPLPMFLMIIAATVGVLV, WLFLFGPILVVMPVFVSYLIV, VGIFLWISLSSIAPIGLLMAG, LALSVLAIVMMSNSLSTIDIV, ILGWNIWRQPVGFLIFWIAAL, FALFYVGSYVNLVLSALVFAV, SLGITMTVLKAYFLIFIAILL, and VSLVNLLLTAALKLAFPFAFG.

This sequence belongs to the complex I subunit 1 family. NDH-1 is composed of at least 11 different subunits.

Its subcellular location is the cellular thylakoid membrane. The catalysed reaction is a plastoquinone + NADH + (n+1) H(+)(in) = a plastoquinol + NAD(+) + n H(+)(out). It catalyses the reaction a plastoquinone + NADPH + (n+1) H(+)(in) = a plastoquinol + NADP(+) + n H(+)(out). Functionally, NDH-1 shuttles electrons from an unknown electron donor, via FMN and iron-sulfur (Fe-S) centers, to quinones in the respiratory and/or the photosynthetic chain. The immediate electron acceptor for the enzyme in this species is believed to be plastoquinone. Couples the redox reaction to proton translocation, and thus conserves the redox energy in a proton gradient. The sequence is that of NAD(P)H-quinone oxidoreductase subunit 1 from Microcystis aeruginosa (strain NIES-843 / IAM M-2473).